A 339-amino-acid polypeptide reads, in one-letter code: Heat-inducible transcription repressor HrcA (339 aa).

The protein belongs to the HrcA family.

In terms of biological role, negative regulator of class I heat shock genes (grpE-dnaK-dnaJ and groELS operons). Prevents heat-shock induction of these operons. The polypeptide is Heat-inducible transcription repressor HrcA (Clostridium perfringens (strain ATCC 13124 / DSM 756 / JCM 1290 / NCIMB 6125 / NCTC 8237 / Type A)).